Here is a 305-residue protein sequence, read N- to C-terminus: MNDLISSSFKRYTDLNHQVQLDDIESQNVSLDSGNLDEFFGYVESVKEDMKAVDEIHKRLQDANEESKTVHDSKAVKKLRARMDSSVTEVLKRVKMIKTKLVALEKSNAAQRKVAGCGPGSSADRTRTSVVSGLGKKLKDMMDDFQRLRTKMATEYKETVERRYFTVTGQKADEETVEKLISSGESERFLQKAIQEQGRGQVMDTLSEIQERHDTVKEIERSLLELHQVFLDMAALVEAQGNMLNDIESNVSKASSFVMRGTDQLHGAKVLQRNNRKWACIATILAIVVVIVILFPILFNTLLRP.

M1 is modified (N-acetylmethionine). Topologically, residues 1–278 (MNDLISSSFK…KVLQRNNRKW (278 aa)) are cytoplasmic. The stretch at 46 to 66 (VKEDMKAVDEIHKRLQDANEE) forms a coiled coil. The t-SNARE coiled-coil homology domain maps to 206-268 (LSEIQERHDT…MRGTDQLHGA (63 aa)). A helical; Anchor for type IV membrane protein transmembrane segment spans residues 279-299 (ACIATILAIVVVIVILFPILF). Over 300–305 (NTLLRP) the chain is Vesicular.

It belongs to the syntaxin family. Part of the t-SNARE complex. In terms of tissue distribution, expressed in tips of root hairs.

The protein localises to the membrane. Vesicle trafficking protein that functions in the secretory pathway. Acts in coordination with SYP132 to mediate tip-focused membrane trafficking for root hair tip growth. Functions in root hair elongation by forming SNARE complexes with VAMP721,VAMP722 or VAMP724. This Arabidopsis thaliana (Mouse-ear cress) protein is Syntaxin-123.